The following is a 73-amino-acid chain: uncharacterized protein (73 aa).

A signal peptide spans 1–30 (MVDFYFIEEKVAYRAAFTTTGKIAATLGLA).

This is an uncharacterized protein from Archaeoglobus fulgidus (strain ATCC 49558 / DSM 4304 / JCM 9628 / NBRC 100126 / VC-16).